Consider the following 143-residue polypeptide: Small ribosomal subunit protein uS9A (143 aa).

The residue at position 2 (S2) is an N-acetylserine. K30 participates in a covalent cross-link: Glycyl lysine isopeptide (Lys-Gly) (interchain with G-Cter in ubiquitin). S34 is subject to Phosphoserine. Residues K47 and K59 each participate in a glycyl lysine isopeptide (Lys-Gly) (interchain with G-Cter in ubiquitin) cross-link. S61 bears the Phosphoserine mark. A Phosphothreonine modification is found at T70. Position 76 is a phosphoserine (S76). A disordered region spans residues 123-143 (RPEPKKFGGKGARSRFQKSYR). The span at 134–143 (ARSRFQKSYR) shows a compositional bias: basic residues.

Belongs to the universal ribosomal protein uS9 family. As to quaternary structure, component of the small ribosomal subunit (SSU). Mature yeast ribosomes consist of a small (40S) and a large (60S) subunit. The 40S small subunit contains 1 molecule of ribosomal RNA (18S rRNA) and 33 different proteins (encoded by 57 genes). The large 60S subunit contains 3 rRNA molecules (25S, 5.8S and 5S rRNA) and 46 different proteins (encoded by 81 genes).

The protein localises to the cytoplasm. In terms of biological role, component of the ribosome, a large ribonucleoprotein complex responsible for the synthesis of proteins in the cell. The small ribosomal subunit (SSU) binds messenger RNAs (mRNAs) and translates the encoded message by selecting cognate aminoacyl-transfer RNA (tRNA) molecules. The large subunit (LSU) contains the ribosomal catalytic site termed the peptidyl transferase center (PTC), which catalyzes the formation of peptide bonds, thereby polymerizing the amino acids delivered by tRNAs into a polypeptide chain. The nascent polypeptides leave the ribosome through a tunnel in the LSU and interact with protein factors that function in enzymatic processing, targeting, and the membrane insertion of nascent chains at the exit of the ribosomal tunnel. In Saccharomyces cerevisiae (strain ATCC 204508 / S288c) (Baker's yeast), this protein is Small ribosomal subunit protein uS9A.